The primary structure comprises 263 residues: (R)-S-adenosyl-L-methionine hydrolase (263 aa).

Asp-18, Asp-82, and Asn-181 together coordinate adenosine. (R)-S-adenosyl-L-methionine is bound by residues Asn-181, Tyr-221, Ser-234, Glu-239, and Met-244.

Belongs to the SAM hydrolase / SAM-dependent halogenase family. As to quaternary structure, homotrimer.

It carries out the reaction (R)-S-adenosyl-L-methionine + H2O = adenosine + L-methionine + H(+). In terms of biological role, catalyzes the hydrolysis of S-adenosyl-L-methionine (SAM) into adenosine and L-methionine. Does not have chlorinase or fluorinase activity. In Methanocaldococcus jannaschii (strain ATCC 43067 / DSM 2661 / JAL-1 / JCM 10045 / NBRC 100440) (Methanococcus jannaschii), this protein is (R)-S-adenosyl-L-methionine hydrolase.